A 96-amino-acid polypeptide reads, in one-letter code: DNA-directed RNA polymerase subunit Rpo11 (96 aa).

Belongs to the archaeal Rpo11/eukaryotic RPB11/RPC19 RNA polymerase subunit family. As to quaternary structure, part of the RNA polymerase complex.

The protein resides in the cytoplasm. The catalysed reaction is RNA(n) + a ribonucleoside 5'-triphosphate = RNA(n+1) + diphosphate. Its function is as follows. DNA-dependent RNA polymerase (RNAP) catalyzes the transcription of DNA into RNA using the four ribonucleoside triphosphates as substrates. The chain is DNA-directed RNA polymerase subunit Rpo11 from Methanococcus maripaludis (strain C5 / ATCC BAA-1333).